The sequence spans 1303 residues: D-lysergyl-peptide-synthetase subunit 2 (1303 aa).

An adenylation (A) domain region spans residues 256–653 (EWCRWTPSAV…CRKSTQVKLR (398 aa)). Residues 793–869 (APSNDIEEAF…ELARHTKLVA (77 aa)) enclose the Carrier domain. Position 830 is an O-(pantetheine 4'-phosphoryl)serine (Ser830). A condensation (C) domain region spans residues 905-1294 (EDVYPCTPLQ…HAAPRTLIGD (390 aa)).

The protein belongs to the NRP synthetase family.

It participates in alkaloid biosynthesis; ergot alkaloid biosynthesis. Its function is as follows. D-lysergyl-peptide-synthetase subunit 2; part of the gene cluster that mediates the biosynthesis of fungal ergot alkaloid. DmaW catalyzes the first step of ergot alkaloid biosynthesis by condensing dimethylallyl diphosphate (DMAP) and tryptophan to form 4-dimethylallyl-L-tryptophan. The second step is catalyzed by the methyltransferase easF that methylates 4-dimethylallyl-L-tryptophan in the presence of S-adenosyl-L-methionine, resulting in the formation of 4-dimethylallyl-L-abrine. The catalase easC and the FAD-dependent oxidoreductase easE then transform 4-dimethylallyl-L-abrine to chanoclavine-I which is further oxidized by easD in the presence of NAD(+), resulting in the formation of chanoclavine-I aldehyde. Agroclavine dehydrogenase easG then mediates the conversion of chanoclavine-I aldehyde to agroclavine via a non-enzymatic adduct reaction: the substrate is an iminium intermediate that is formed spontaneously from chanoclavine-I aldehyde in the presence of glutathione. The presence of easA is not required to complete this reaction. Further conversion of agroclavine to paspalic acid is a two-step process involving oxidation of agroclavine to elymoclavine and of elymoclavine to paspalic acid, the second step being performed by the elymoclavine oxidase cloA. Paspalic acid is then further converted to D-lysergic acid. Ergopeptines are assembled from D-lysergic acid and three different amino acids by the D-lysergyl-peptide-synthetases composed each of a monomudular and a trimodular nonribosomal peptide synthetase subunit. LpsB and lpsC encode the monomodular subunits responsible for D-lysergic acid activation and incorporation into the ergopeptine backbone. LpsA1 and A2 subunits encode the trimodular nonribosomal peptide synthetase assembling the tripeptide portion of ergopeptines. LpsA1 is responsible for formation of the major ergopeptine, ergotamine, and lpsA2 for alpha-ergocryptine, the minor ergopeptine of the total alkaloid mixture elaborated by C.purpurea. D-lysergyl-tripeptides are assembled by the nonribosomal peptide synthetases and released as N-(D-lysergyl-aminoacyl)-lactams. Cyclolization of the D-lysergyl-tripeptides is performed by the Fe(2+)/2-ketoglutarate-dependent dioxygenase easH which introduces a hydroxyl group into N-(D-lysergyl-aminoacyl)-lactam at alpha-C of the aminoacyl residue followed by spontaneous condensation with the terminal lactam carbonyl group. The protein is D-lysergyl-peptide-synthetase subunit 2 of Claviceps purpurea (strain 20.1) (Ergot fungus).